Reading from the N-terminus, the 190-residue chain is MSQEIEIEFKNMLTKQEFKNIASALQLTEKDFTDQKNHYFDTDSFALKQKHAALRIRRKNGKYVLTLKEPADVGLLETHQQLSEVSDLAGFSVPEGPVKDQLHKLQIDTDAIQYFGSLATNRAEKETEKGLIVLDHSRYLNKEDYEIEFEAADWHEGRQAFEKLLQQFSIPQRETKNKILRFYEEKRKSI.

The CYTH domain occupies 4–189 (EIEIEFKNML…LRFYEEKRKS (186 aa)).

In Bacillus subtilis (strain 168), this protein is Putative triphosphatase YjbK (yjbK).